We begin with the raw amino-acid sequence, 259 residues long: Haloacid dehalogenase-like hydrolase domain-containing protein 2 (259 aa).

The Mg(2+) site is built by Asp13 and Asn15. Substrate is bound by residues 13 to 15 and 46 to 47; these read DLN and TN. A coiled-coil region spans residues 47–72; sequence NTTKESKKDLLERLKKLEFEISEDEI. Lys50 carries the post-translational modification N6-succinyllysine. Residue Lys179 coordinates substrate. Asp204 provides a ligand contact to Mg(2+).

It belongs to the HAD-like hydrolase superfamily. The cofactor is Mg(2+).

The chain is Haloacid dehalogenase-like hydrolase domain-containing protein 2 (Hdhd2) from Mus musculus (Mouse).